An 81-amino-acid chain; its full sequence is MAGGSTGERPFSDIITSIRYWVIHSITIPSLFIAGWLFVSTGLAYDVFGTPRPNEYFTQERTQIPLVNDRFNAKQELEDLL.

A helical transmembrane segment spans residues 22-36; sequence VIHSITIPSLFIAGW. Heme is bound at residue His24.

The protein belongs to the PsbE/PsbF family. In terms of assembly, heterodimer of an alpha subunit and a beta subunit. PSII is composed of 1 copy each of membrane proteins PsbA, PsbB, PsbC, PsbD, PsbE, PsbF, PsbH, PsbI, PsbJ, PsbK, PsbL, PsbM, PsbT, PsbX, PsbY, PsbZ, Psb30/Ycf12, at least 3 peripheral proteins of the oxygen-evolving complex and a large number of cofactors. It forms dimeric complexes. Heme b serves as cofactor.

It localises to the plastid. The protein resides in the chloroplast thylakoid membrane. In terms of biological role, this b-type cytochrome is tightly associated with the reaction center of photosystem II (PSII). PSII is a light-driven water:plastoquinone oxidoreductase that uses light energy to abstract electrons from H(2)O, generating O(2) and a proton gradient subsequently used for ATP formation. It consists of a core antenna complex that captures photons, and an electron transfer chain that converts photonic excitation into a charge separation. The polypeptide is Cytochrome b559 subunit alpha (Cyanidioschyzon merolae (strain NIES-3377 / 10D) (Unicellular red alga)).